The primary structure comprises 194 residues: Holliday junction branch migration complex subunit RuvA (194 aa).

The domain I stretch occupies residues 1 to 62 (MIGYLKGNVI…EDSLDLYGFK (62 aa)). Residues 63–136 (TMEERELFET…KGKLKDMSGD (74 aa)) are domain II. A flexible linker region spans residues 136-140 (DFEEP). The interval 141 to 194 (LPDNRNTELSDALASLGYSELEIEEALSNADIKNNGSLEENIKKALGYLGSKGS) is domain III.

This sequence belongs to the RuvA family. As to quaternary structure, homotetramer. Forms an RuvA(8)-RuvB(12)-Holliday junction (HJ) complex. HJ DNA is sandwiched between 2 RuvA tetramers; dsDNA enters through RuvA and exits via RuvB. An RuvB hexamer assembles on each DNA strand where it exits the tetramer. Each RuvB hexamer is contacted by two RuvA subunits (via domain III) on 2 adjacent RuvB subunits; this complex drives branch migration. In the full resolvosome a probable DNA-RuvA(4)-RuvB(12)-RuvC(2) complex forms which resolves the HJ.

The protein localises to the cytoplasm. In terms of biological role, the RuvA-RuvB-RuvC complex processes Holliday junction (HJ) DNA during genetic recombination and DNA repair, while the RuvA-RuvB complex plays an important role in the rescue of blocked DNA replication forks via replication fork reversal (RFR). RuvA specifically binds to HJ cruciform DNA, conferring on it an open structure. The RuvB hexamer acts as an ATP-dependent pump, pulling dsDNA into and through the RuvAB complex. HJ branch migration allows RuvC to scan DNA until it finds its consensus sequence, where it cleaves and resolves the cruciform DNA. The chain is Holliday junction branch migration complex subunit RuvA from Halothermothrix orenii (strain H 168 / OCM 544 / DSM 9562).